A 506-amino-acid chain; its full sequence is UDP-N-acetylmuramoyl-L-alanyl-D-glutamate--2,6-diaminopimelate ligase (506 aa).

Serine 42 lines the UDP-N-acetyl-alpha-D-muramoyl-L-alanyl-D-glutamate pocket. ATP is bound at residue 125-131 (GTSGKTT). UDP-N-acetyl-alpha-D-muramoyl-L-alanyl-D-glutamate is bound by residues 166–167 (TT), serine 193, and arginine 201. Lysine 233 is modified (N6-carboxylysine). Meso-2,6-diaminopimelate is bound by residues arginine 395, 419 to 422 (DNPR), glycine 475, and glutamate 479. Residues 419 to 422 (DNPR) carry the Meso-diaminopimelate recognition motif motif.

It belongs to the MurCDEF family. MurE subfamily. The cofactor is Mg(2+). In terms of processing, carboxylation is probably crucial for Mg(2+) binding and, consequently, for the gamma-phosphate positioning of ATP.

The protein localises to the cytoplasm. It catalyses the reaction UDP-N-acetyl-alpha-D-muramoyl-L-alanyl-D-glutamate + meso-2,6-diaminopimelate + ATP = UDP-N-acetyl-alpha-D-muramoyl-L-alanyl-gamma-D-glutamyl-meso-2,6-diaminopimelate + ADP + phosphate + H(+). Its pathway is cell wall biogenesis; peptidoglycan biosynthesis. Functionally, catalyzes the addition of meso-diaminopimelic acid to the nucleotide precursor UDP-N-acetylmuramoyl-L-alanyl-D-glutamate (UMAG) in the biosynthesis of bacterial cell-wall peptidoglycan. This is UDP-N-acetylmuramoyl-L-alanyl-D-glutamate--2,6-diaminopimelate ligase from Streptomyces coelicolor (strain ATCC BAA-471 / A3(2) / M145).